A 318-amino-acid polypeptide reads, in one-letter code: MGERDDGLGLSLSLGNSQQKEPSLRLNLMPLTTSSSSSSFQHMHNQNNNSHPQKIHNISWTHLFQSSGIKRTTAERNSDAGSFLRGFNVNRAQSSVAVVDLEEEAAVVSSPNSAVSSLSGNKRDLAVARGGDENEAERASCSRGGGSGGSDDEDGGNGDGSRKKLRLSKDQALVLEETFKEHSTLNPKQKLALAKQLNLRARQVEVWFQNRRARTKLKQTEVDCEYLKRCCDNLTEENRRLQKEVSELRALKLSPHLYMHMTPPTTLTMCPSCERVSSSAATVTAAPSTTTTPTVVGRPSPQRLTPWTAISLQQKSGR.

Disordered stretches follow at residues 1 to 23 (MGER…KEPS) and 128 to 165 (ARGG…RKKL). Residues 8 to 17 (LGLSLSLGNS) are compositionally biased toward low complexity. The span at 128–140 (ARGGDENEAERAS) shows a compositional bias: basic and acidic residues. The segment at residues 160 to 219 (GSRKKLRLSKDQALVLEETFKEHSTLNPKQKLALAKQLNLRARQVEVWFQNRRARTKLKQ) is a DNA-binding region (homeobox). Positions 227 to 248 (LKRCCDNLTEENRRLQKEVSEL) are leucine-zipper.

The protein belongs to the HD-ZIP homeobox family. Class II subfamily.

It localises to the nucleus. Functionally, probable transcription factor. The protein is Homeobox-leucine zipper protein ATHB-4 (ATHB-4) of Arabidopsis thaliana (Mouse-ear cress).